The primary structure comprises 281 residues: NADPH-dependent 7-cyano-7-deazaguanine reductase (281 aa).

A substrate-binding site is contributed by 88–90; sequence IES. Residue 90-91 coordinates NADPH; the sequence is SK. Cys189 serves as the catalytic Thioimide intermediate. The active-site Proton donor is the Asp196. Residue 228–229 coordinates substrate; sequence HE. 257–258 contacts NADPH; sequence RG.

Belongs to the GTP cyclohydrolase I family. QueF type 2 subfamily. As to quaternary structure, homodimer.

The protein localises to the cytoplasm. It catalyses the reaction 7-aminomethyl-7-carbaguanine + 2 NADP(+) = 7-cyano-7-deazaguanine + 2 NADPH + 3 H(+). Its pathway is tRNA modification; tRNA-queuosine biosynthesis. In terms of biological role, catalyzes the NADPH-dependent reduction of 7-cyano-7-deazaguanine (preQ0) to 7-aminomethyl-7-deazaguanine (preQ1). The polypeptide is NADPH-dependent 7-cyano-7-deazaguanine reductase (Yersinia enterocolitica serotype O:8 / biotype 1B (strain NCTC 13174 / 8081)).